Reading from the N-terminus, the 168-residue chain is Large ribosomal subunit protein bL17 (168 aa).

Positions 121–146 (AEAEGGEEKAEQKTEKKAAKAKEPKA) are enriched in basic and acidic residues. Positions 121–168 (AEAEGGEEKAEQKTEKKAAKAKEPKAAKAPKKAAAKPKAKAEKKGAEE) are disordered. The segment covering 148–158 (KAPKKAAAKPK) has biased composition (basic residues). Residues 159 to 168 (AKAEKKGAEE) show a composition bias toward basic and acidic residues.

This sequence belongs to the bacterial ribosomal protein bL17 family. As to quaternary structure, part of the 50S ribosomal subunit. Contacts protein L32.

This chain is Large ribosomal subunit protein bL17, found in Anaeromyxobacter sp. (strain Fw109-5).